Reading from the N-terminus, the 314-residue chain is uncharacterized protein (314 aa).

Basic residues-rich tracts occupy residues 1 to 16 and 49 to 65; these read MAGNSKRRGAVRKAGT and AAKRAAKAAKQQQRRPA. The tract at residues 1 to 73 is disordered; sequence MAGNSKRRGA…PARKTDETEL (73 aa). 3 residues coordinate S-adenosyl-L-methionine: G266, I286, and L295.

The protein belongs to the class IV-like SAM-binding methyltransferase superfamily. RNA methyltransferase TrmH family.

This is an uncharacterized protein from Mycobacterium sp. (strain KMS).